The following is a 138-amino-acid chain: Acidic phospholipase A2 Tbo-E6 (138 aa).

Residues 1 to 16 form the signal peptide; it reads MRTLWILAVLLLGVKG. 7 disulfide bridges follow: cysteine 42–cysteine 131, cysteine 44–cysteine 60, cysteine 59–cysteine 111, cysteine 65–cysteine 138, cysteine 66–cysteine 104, cysteine 73–cysteine 97, and cysteine 91–cysteine 102. Tyrosine 43, glycine 45, and glycine 47 together coordinate Ca(2+). Histidine 63 is an active-site residue. Position 64 (aspartate 64) interacts with Ca(2+). Aspartate 105 is an active-site residue.

Monomer. Requires Ca(2+) as cofactor. In terms of tissue distribution, expressed by the venom gland.

Its subcellular location is the secreted. The catalysed reaction is a 1,2-diacyl-sn-glycero-3-phosphocholine + H2O = a 1-acyl-sn-glycero-3-phosphocholine + a fatty acid + H(+). Its function is as follows. Snake venom phospholipase A2 (PLA2) that impairs hemostasis. It weakly inhibits ADP-induced platelet aggregation when tested on platelet rich plasma from human and rabbit blood (15-25% of inhibition at 5-10 ug of enzyme), and dose-dependently inhibits blood coagulation, possibly by inhibiting thrombin activation. Exhibits high hydrolytic activities toward L-dipalmitoyl phosphatidylcholine. PLA2 catalyzes the calcium-dependent hydrolysis of the 2-acyl groups in 3-sn-phosphoglycerides. This is Acidic phospholipase A2 Tbo-E6 from Craspedocephalus borneensis (Borneo pit viper).